Here is a 968-residue protein sequence, read N- to C-terminus: Isoleucine--tRNA ligase (968 aa).

Positions 68–78 (PYANGALHMGH) match the 'HIGH' region motif. Glu584 serves as a coordination point for L-isoleucyl-5'-AMP. The 'KMSKS' region signature appears at 625–629 (KMSKS). Lys628 serves as a coordination point for ATP. Zn(2+) contacts are provided by Cys938, Cys941, Cys958, and Cys961.

It belongs to the class-I aminoacyl-tRNA synthetase family. IleS type 1 subfamily. In terms of assembly, monomer. Zn(2+) serves as cofactor.

The protein localises to the cytoplasm. It carries out the reaction tRNA(Ile) + L-isoleucine + ATP = L-isoleucyl-tRNA(Ile) + AMP + diphosphate. Functionally, catalyzes the attachment of isoleucine to tRNA(Ile). As IleRS can inadvertently accommodate and process structurally similar amino acids such as valine, to avoid such errors it has two additional distinct tRNA(Ile)-dependent editing activities. One activity is designated as 'pretransfer' editing and involves the hydrolysis of activated Val-AMP. The other activity is designated 'posttransfer' editing and involves deacylation of mischarged Val-tRNA(Ile). In Synechococcus sp. (strain CC9311), this protein is Isoleucine--tRNA ligase.